The sequence spans 423 residues: Dihydroorotase (423 aa).

Residues His-60 and His-62 each contribute to the Zn(2+) site. Substrate is bound by residues His-62–Arg-64 and Asn-94. Zn(2+) contacts are provided by Asp-152, His-179, His-232, and Asp-305. Residue Asp-305 is part of the active site. Residues His-309 and Pro-323–Gly-324 each bind substrate.

The protein belongs to the metallo-dependent hydrolases superfamily. DHOase family. Class I DHOase subfamily. Zn(2+) is required as a cofactor.

It carries out the reaction (S)-dihydroorotate + H2O = N-carbamoyl-L-aspartate + H(+). The protein operates within pyrimidine metabolism; UMP biosynthesis via de novo pathway; (S)-dihydroorotate from bicarbonate: step 3/3. Its function is as follows. Catalyzes the reversible cyclization of carbamoyl aspartate to dihydroorotate. This is Dihydroorotase from Sulfurihydrogenibium sp. (strain YO3AOP1).